A 305-amino-acid chain; its full sequence is Uridylate cyclase (305 aa).

Mn(2+) contacts are provided by D58 and D102.

It belongs to the adenylyl cyclase class-4/guanylyl cyclase family. Pyrimidine cyclase subfamily. In terms of assembly, homodimer. Mn(2+) is required as a cofactor.

It is found in the cytoplasm. It catalyses the reaction GTP = 3',5'-cyclic GMP + diphosphate. The catalysed reaction is UTP = 3',5'-cyclic UMP + diphosphate. Pycsar (pyrimidine cyclase system for antiphage resistance) provides immunity against bacteriophage. The pyrimidine cyclase (PycC) synthesizes cyclic nucleotides in response to infection; these serve as specific second messenger signals. The signals activate the adjacent effector, leading to bacterial cell death and abortive phage infection. A clade D Pycsar system. In terms of biological role, the pyrimidine cyclase gene of a two-gene Pycsar system, generates cyclic UMP (cUMP) from UTP as well as cGMP from GTP to a lesser extent, has little to no activity on ATP or CTP. Expression of this and adjacent effector MePycTM (AC A0A1C5G2D0) probably confers resistance to bacteriophage. The genes are probably only expressed in response to bacteriophage infection. The protein is Uridylate cyclase of Micromonospora echinofusca.